Here is a 93-residue protein sequence, read N- to C-terminus: Putative pterin-4-alpha-carbinolamine dehydratase (93 aa).

The protein belongs to the pterin-4-alpha-carbinolamine dehydratase family.

The catalysed reaction is (4aS,6R)-4a-hydroxy-L-erythro-5,6,7,8-tetrahydrobiopterin = (6R)-L-erythro-6,7-dihydrobiopterin + H2O. The protein is Putative pterin-4-alpha-carbinolamine dehydratase of Nostoc punctiforme (strain ATCC 29133 / PCC 73102).